The chain runs to 108 residues: Integration host factor subunit alpha (108 aa).

The protein belongs to the bacterial histone-like protein family. As to quaternary structure, heterodimer of an alpha and a beta chain.

In terms of biological role, this protein is one of the two subunits of integration host factor, a specific DNA-binding protein that functions in genetic recombination as well as in transcriptional and translational control. The polypeptide is Integration host factor subunit alpha (Methylorubrum extorquens (strain CM4 / NCIMB 13688) (Methylobacterium extorquens)).